Consider the following 155-residue polypeptide: Cell division protein SepF (155 aa).

Over residues 22–46 (RYVEEPEQRDERPALEKGRAPKEKQ) the composition is skewed to basic and acidic residues. A disordered region spans residues 22–54 (RYVEEPEQRDERPALEKGRAPKEKQTAGMEQNQ).

It belongs to the SepF family. As to quaternary structure, homodimer. Interacts with FtsZ.

It is found in the cytoplasm. Cell division protein that is part of the divisome complex and is recruited early to the Z-ring. Probably stimulates Z-ring formation, perhaps through the cross-linking of FtsZ protofilaments. Its function overlaps with FtsA. The sequence is that of Cell division protein SepF from Shouchella clausii (strain KSM-K16) (Alkalihalobacillus clausii).